A 358-amino-acid polypeptide reads, in one-letter code: Nicotinate-nucleotide--dimethylbenzimidazole phosphoribosyltransferase (358 aa).

The active-site Proton acceptor is the glutamate 323.

The protein belongs to the CobT family.

It catalyses the reaction 5,6-dimethylbenzimidazole + nicotinate beta-D-ribonucleotide = alpha-ribazole 5'-phosphate + nicotinate + H(+). It functions in the pathway nucleoside biosynthesis; alpha-ribazole biosynthesis; alpha-ribazole from 5,6-dimethylbenzimidazole: step 1/2. In terms of biological role, catalyzes the synthesis of alpha-ribazole-5'-phosphate from nicotinate mononucleotide (NAMN) and 5,6-dimethylbenzimidazole (DMB). The protein is Nicotinate-nucleotide--dimethylbenzimidazole phosphoribosyltransferase of Oleidesulfovibrio alaskensis (strain ATCC BAA-1058 / DSM 17464 / G20) (Desulfovibrio alaskensis).